The primary structure comprises 252 residues: MAAVTKPLVLITGANQGLGFATAQQLASTGQYNLLVAARSQEKAEGAVKQLESSTNSSLTPIVIDLDQDESITAAAKFVEERFGSLDILINNAGINRSSDPNATLRESYRAVFETNVFGVAVMTATFLPLLRASKYHDRRIVNVTSGLGQIGIAYSPTSEYSAKIWELPIYRSSKSAINMISAVDAVSLEKENILVVLAAPGFCRTNFGGGQGVKSAEEGARPIVRAATEGSPKELFGKLVDDENTLVEFGW.

NADP(+) is bound by residues Leu18, Asp65, Asn92, Tyr171, Lys175, and Thr206. Tyr171 (proton acceptor) is an active-site residue. Residue Tyr171 is the Proton donor of the active site. Lys175 acts as the Lowers pKa of active site Tyr in catalysis.

It belongs to the short-chain dehydrogenases/reductases (SDR) family.

Highly reducing polyketide synthase; part of the gene cluster that mediates the biosynthesis of annullatin D, an alkylated aromatic polyketide with a fused dihydrobenzofuran lactone ring system that exhibits potent agonistic activities toward the cannabinoid receptors. AnuI does not seem to play a role within the pathway. The annullatin backbone 2-hydroxymethyl-3-pentylphenol is assembled from one acetyl-CoA starter unit and 5 malonyl-CoA elongation units by cooperation of the highly reducing polyketide synthase anuA, the short-chain dehydrogenase anuB and the oxidoreductase anuC, before being hydroxylated at the C-5 alkyl chain by the cytochrome P450 monooxygenase anuE to form (8S)-annullatin E. The prenyltransferase anuH subsequently installs one isoprenyl group at the benzene ring to form (8S)-annullatin J. Enzymatic or nonenzymatic dihydro-benzofuran ring formation between the prenyl and the phenolic hydroxyl groups in (8S)-annullatin J results in two diastereomers (2S,9S)-annullatin H and compound 12. The intermediate (2S,9S)-annullatin H is then converted to (2S,9S)-annullatin D by the FAD-linked oxidoreductase anuG-catalyzed five-member lactone ring formation. The isomer 12 acts as a substrate for the short-chain dehydrogenase anuF and is oxidized to (2R)-annullatin F, which is subsequently acetylated by an acetyltransferase leading to (2R)-annullatin G formation. The remaining enzymes identified within the cluster, anuD, anuI and anuJ, seem not to be involved in annullatin biosynthesis. The protein is Short-chain dehydrogenase anuI of Penicillium roqueforti (strain FM164).